We begin with the raw amino-acid sequence, 230 residues long: UPF0173 metal-dependent hydrolase Dshi_2788 (230 aa).

The protein belongs to the UPF0173 family.

This Dinoroseobacter shibae (strain DSM 16493 / NCIMB 14021 / DFL 12) protein is UPF0173 metal-dependent hydrolase Dshi_2788.